Reading from the N-terminus, the 452-residue chain is Probable glycine dehydrogenase (decarboxylating) subunit 1 (452 aa).

It belongs to the GcvP family. N-terminal subunit subfamily. The glycine cleavage system is composed of four proteins: P, T, L and H. In this organism, the P 'protein' is a heterodimer of two subunits.

The enzyme catalyses N(6)-[(R)-lipoyl]-L-lysyl-[glycine-cleavage complex H protein] + glycine + H(+) = N(6)-[(R)-S(8)-aminomethyldihydrolipoyl]-L-lysyl-[glycine-cleavage complex H protein] + CO2. The glycine cleavage system catalyzes the degradation of glycine. The P protein binds the alpha-amino group of glycine through its pyridoxal phosphate cofactor; CO(2) is released and the remaining methylamine moiety is then transferred to the lipoamide cofactor of the H protein. In Sphingopyxis alaskensis (strain DSM 13593 / LMG 18877 / RB2256) (Sphingomonas alaskensis), this protein is Probable glycine dehydrogenase (decarboxylating) subunit 1.